A 231-amino-acid chain; its full sequence is MAKVSKRVAANKAKIERTKFYPIDEALGLVKGCASAKFDESIDVAVQLGIDAKKSDQVVRGSVVLPAGTGKSVRVAVFAQGDKAEAAKAAGADIVGMEDLAEQVKAGNLNFDVVIASPDTMRIVGTLGQILGPRGLMPNPKVGTVTPDVAQAVKNAKAGQVQFRVDKAGIIHATIGRRSFEDTALKSNLAALLDALVKAKPATSKGVYLRKIAVSSTMGVGVRVEQASLSA.

This sequence belongs to the universal ribosomal protein uL1 family. In terms of assembly, part of the 50S ribosomal subunit.

In terms of biological role, binds directly to 23S rRNA. The L1 stalk is quite mobile in the ribosome, and is involved in E site tRNA release. Functionally, protein L1 is also a translational repressor protein, it controls the translation of the L11 operon by binding to its mRNA. In Cupriavidus pinatubonensis (strain JMP 134 / LMG 1197) (Cupriavidus necator (strain JMP 134)), this protein is Large ribosomal subunit protein uL1.